The following is a 252-amino-acid chain: Enolase-phosphatase E1 (252 aa).

Residues D14 and E16 each contribute to the Mg(2+) site. Substrate contacts are provided by residues 143 to 144 and K177; that span reads SS. Residue D202 coordinates Mg(2+).

The protein belongs to the HAD-like hydrolase superfamily. MasA/MtnC family. As to quaternary structure, monomer. Mg(2+) is required as a cofactor.

It localises to the cytoplasm. Its subcellular location is the nucleus. It carries out the reaction 5-methylsulfanyl-2,3-dioxopentyl phosphate + H2O = 1,2-dihydroxy-5-(methylsulfanyl)pent-1-en-3-one + phosphate. It participates in amino-acid biosynthesis; L-methionine biosynthesis via salvage pathway; L-methionine from S-methyl-5-thio-alpha-D-ribose 1-phosphate: step 3/6. The protein operates within amino-acid biosynthesis; L-methionine biosynthesis via salvage pathway; L-methionine from S-methyl-5-thio-alpha-D-ribose 1-phosphate: step 4/6. Functionally, bifunctional enzyme that catalyzes the enolization of 2,3-diketo-5-methylthiopentyl-1-phosphate (DK-MTP-1-P) into the intermediate 2-hydroxy-3-keto-5-methylthiopentenyl-1-phosphate (HK-MTPenyl-1-P), which is then dephosphorylated to form the acireductone 1,2-dihydroxy-3-keto-5-methylthiopentene (DHK-MTPene). The chain is Enolase-phosphatase E1 from Drosophila pseudoobscura pseudoobscura (Fruit fly).